We begin with the raw amino-acid sequence, 258 residues long: Regulatory protein RecX (258 aa).

The protein belongs to the RecX family.

The protein localises to the cytoplasm. Modulates RecA activity. The polypeptide is Regulatory protein RecX (Streptococcus agalactiae serotype Ia (strain ATCC 27591 / A909 / CDC SS700)).